We begin with the raw amino-acid sequence, 180 residues long: Peptidyl-tRNA hydrolase (180 aa).

Residue Tyr-15 coordinates tRNA. His-20 functions as the Proton acceptor in the catalytic mechanism. TRNA-binding residues include Phe-67, Asn-69, and Asn-115.

It belongs to the PTH family. As to quaternary structure, monomer.

It is found in the cytoplasm. The enzyme catalyses an N-acyl-L-alpha-aminoacyl-tRNA + H2O = an N-acyl-L-amino acid + a tRNA + H(+). Its function is as follows. Hydrolyzes ribosome-free peptidyl-tRNAs (with 1 or more amino acids incorporated), which drop off the ribosome during protein synthesis, or as a result of ribosome stalling. Functionally, catalyzes the release of premature peptidyl moieties from peptidyl-tRNA molecules trapped in stalled 50S ribosomal subunits, and thus maintains levels of free tRNAs and 50S ribosomes. In Chlamydia pneumoniae (Chlamydophila pneumoniae), this protein is Peptidyl-tRNA hydrolase.